Consider the following 215-residue polypeptide: Adenylate kinase (215 aa).

An ATP-binding site is contributed by 10–15; sequence GAGKGT. Residues 30–59 form an NMP region; sequence STGDILRDAVSKGTELGKMAKAIMDRGELV. AMP contacts are provided by residues Thr31, Arg36, 57 to 59, 82 to 85, and Gln89; these read ELV and GYPR. Positions 123–160 are LID; it reads NRRVCPNCGKVYNLITLQPKEDEKCDVCGTKLIQRDDD. ATP is bound at residue Arg124. Residues Cys127 and Cys130 each coordinate Zn(2+). Position 133-134 (133-134) interacts with ATP; it reads VY. Zn(2+) contacts are provided by Cys147 and Cys150. AMP contacts are provided by Arg157 and Arg168. Position 196 (Gln196) interacts with ATP.

The protein belongs to the adenylate kinase family. In terms of assembly, monomer.

The protein localises to the cytoplasm. It catalyses the reaction AMP + ATP = 2 ADP. Its pathway is purine metabolism; AMP biosynthesis via salvage pathway; AMP from ADP: step 1/1. Its function is as follows. Catalyzes the reversible transfer of the terminal phosphate group between ATP and AMP. Plays an important role in cellular energy homeostasis and in adenine nucleotide metabolism. The protein is Adenylate kinase of Petrotoga mobilis (strain DSM 10674 / SJ95).